We begin with the raw amino-acid sequence, 364 residues long: Salivary endonuclease (364 aa).

Residues 1 to 24 (MSSFFLSISPLVLALFHVVVQVCS) form the signal peptide. The N-linked (GlcNAc...) asparagine glycan is linked to Asn285.

Belongs to the DNA/RNA non-specific endonuclease family. Mg(2+) is required as a cofactor. Saliva (at protein level). Female salivary gland.

Its subcellular location is the secreted. In terms of biological role, hydrolyzes double-stranded DNA with no sequence specificity. Does not cleave ssDNA and RNA. May facilitate blood meal intake by lowering the local viscosity created by the release of host DNA. In Culex quinquefasciatus (Southern house mosquito), this protein is Salivary endonuclease.